The primary structure comprises 438 residues: Chaperone SurA (438 aa).

An N-terminal signal peptide occupies residues 1–28 (MKTMNPYIRHLILLICCLGGMLAQPLSA). PpiC domains are found at residues 181-282 (EEEY…KLVS) and 292-390 (VQQT…QVLE).

It is found in the periplasm. It catalyses the reaction [protein]-peptidylproline (omega=180) = [protein]-peptidylproline (omega=0). Chaperone involved in the correct folding and assembly of outer membrane proteins. Recognizes specific patterns of aromatic residues and the orientation of their side chains, which are found more frequently in integral outer membrane proteins. May act in both early periplasmic and late outer membrane-associated steps of protein maturation. The sequence is that of Chaperone SurA from Dechloromonas aromatica (strain RCB).